The chain runs to 1397 residues: DNA-directed RNA polymerase subunit beta' (1397 aa).

Zn(2+) contacts are provided by cysteine 75, cysteine 77, cysteine 90, and cysteine 93. Positions 465, 467, and 469 each coordinate Mg(2+). Residues cysteine 819, cysteine 893, cysteine 900, and cysteine 903 each contribute to the Zn(2+) site.

It belongs to the RNA polymerase beta' chain family. The RNAP catalytic core consists of 2 alpha, 1 beta, 1 beta' and 1 omega subunit. When a sigma factor is associated with the core the holoenzyme is formed, which can initiate transcription. It depends on Mg(2+) as a cofactor. Zn(2+) is required as a cofactor.

The enzyme catalyses RNA(n) + a ribonucleoside 5'-triphosphate = RNA(n+1) + diphosphate. Its function is as follows. DNA-dependent RNA polymerase catalyzes the transcription of DNA into RNA using the four ribonucleoside triphosphates as substrates. This is DNA-directed RNA polymerase subunit beta' from Acinetobacter baumannii (strain ACICU).